The following is a 466-amino-acid chain: 55 kDa erythrocyte membrane protein (466 aa).

Threonine 2 is subject to N-acetylthreonine. Serine 13 and serine 19 each carry phosphoserine. Threonine 49 carries the post-translational modification Phosphothreonine. Serine 52, serine 57, and serine 110 each carry phosphoserine. One can recognise a PDZ domain in the interval leucine 71–glutamine 152. The SH3 domain occupies alanine 158–valine 228. Phosphoserine is present on serine 243. The interval valine 268 to tyrosine 466 is interaction with PALS1. Residues arginine 282–aspartate 451 enclose the Guanylate kinase-like domain.

It belongs to the MAGUK family. As to quaternary structure, heterodimer with PALS1. Interacts with DLG5 and NF2. Interacts (via guanylate kinase-like domain) with WHRN (via third PDZ domain). In terms of processing, palmitoylated.

The protein resides in the cell membrane. It localises to the cell projection. It is found in the stereocilium. In terms of biological role, essential regulator of neutrophil polarity. Regulates neutrophil polarization by regulating AKT1 phosphorylation through a mechanism that is independent of PIK3CG activity. The sequence is that of 55 kDa erythrocyte membrane protein (MPP1) from Pongo abelii (Sumatran orangutan).